Consider the following 573-residue polypeptide: MEPAEDSLGATIQPPELVRVPRGRSLRILLGLRGALSPDVRREAAALVALAGPVFLAQLMIFLISIVSSIFCGHLGKVELDAVTLAVSVVNVTGISVGTGLASACDTLMSQSFGGKNLKRVGVILQRGILILLLCCFPCWAIFLNTERLLLLLRQDPDVARLAQVYVMICIPALPAAFLFQLQTRYLQSQGIIMPQVIVGIAANVVNVGMNAFLLYALDLGVVGSAWANTTSQFFLSALLFLYVWWKRIHIHTWGGWTRECFQEWSSYTRLAIPSMFMVCIEWWTFEIGTFLAGLVNVTELGAQAVIYELASVAYMVPFGFGVAASVRVGNALGAGNADQARCSCTTVLLCAGVCALLVGILLAALKDVVAYIFTNDKDIISLVSQVMPIFAPFHLFDALAGTCGGVLRGTGKQKIGAVLNTIGYYGFGFPIGVSLMFAAKLGIIGLWAGLIVCVSFQAFSYLIYILRTNWSRVAEQAQVRAGLKSTKELIPTPADLPILEREVMDGVILPDIIRPESQTGQLVVEENSQCAVPTVGEVLTGRQLVFYRGMALTVSVAVLIAGIVVRVFNDRG.

Residues 1–46 (MEPAEDSLGATIQPPELVRVPRGRSLRILLGLRGALSPDVRREAAA) lie on the Cytoplasmic side of the membrane. The helical transmembrane segment at 47–67 (LVALAGPVFLAQLMIFLISIV) threads the bilayer. Topologically, residues 68-81 (SSIFCGHLGKVELD) are extracellular. A helical membrane pass occupies residues 82 to 102 (AVTLAVSVVNVTGISVGTGLA). At 103–122 (SACDTLMSQSFGGKNLKRVG) the chain is on the cytoplasmic side. A helical transmembrane segment spans residues 123-143 (VILQRGILILLLCCFPCWAIF). Residues 144 to 161 (LNTERLLLLLRQDPDVAR) lie on the Extracellular side of the membrane. Residues 162–182 (LAQVYVMICIPALPAAFLFQL) form a helical membrane-spanning segment. Topologically, residues 183–196 (QTRYLQSQGIIMPQ) are cytoplasmic. Residues 197–217 (VIVGIAANVVNVGMNAFLLYA) traverse the membrane as a helical segment. Residues 218 to 225 (LDLGVVGS) lie on the Extracellular side of the membrane. The helical transmembrane segment at 226 to 246 (AWANTTSQFFLSALLFLYVWW) threads the bilayer. At 247 to 266 (KRIHIHTWGGWTRECFQEWS) the chain is on the cytoplasmic side. A helical transmembrane segment spans residues 267-286 (SYTRLAIPSMFMVCIEWWTF). Topologically, residues 287 to 304 (EIGTFLAGLVNVTELGAQ) are extracellular. The chain crosses the membrane as a helical span at residues 305-325 (AVIYELASVAYMVPFGFGVAA). At 326–345 (SVRVGNALGAGNADQARCSC) the chain is on the cytoplasmic side. Residues 346–366 (TTVLLCAGVCALLVGILLAAL) traverse the membrane as a helical segment. The Extracellular segment spans residues 367 to 379 (KDVVAYIFTNDKD). Residues 380–400 (IISLVSQVMPIFAPFHLFDAL) traverse the membrane as a helical segment. At 401–415 (AGTCGGVLRGTGKQK) the chain is on the cytoplasmic side. The chain crosses the membrane as a helical span at residues 416–436 (IGAVLNTIGYYGFGFPIGVSL). The Extracellular segment spans residues 437 to 443 (MFAAKLG). Residues 444–464 (IIGLWAGLIVCVSFQAFSYLI) traverse the membrane as a helical segment. Topologically, residues 465 to 545 (YILRTNWSRV…VGEVLTGRQL (81 aa)) are cytoplasmic. The chain crosses the membrane as a helical span at residues 546–566 (VFYRGMALTVSVAVLIAGIVV). Over 567 to 573 (RVFNDRG) the chain is Extracellular.

This sequence belongs to the multi antimicrobial extrusion (MATE) (TC 2.A.66.1) family. Expressed in testis; especially in testicular Leydig cells.

The protein localises to the cell membrane. In terms of biological role, multidrug efflux pump that functions as a H(+)/organic cation antiporter. May mediate testosterone efflux from the Leydig cells in the testes. The polypeptide is Multidrug and toxin extrusion protein 2 (Slc47a2) (Mus musculus (Mouse)).